Here is a 282-residue protein sequence, read N- to C-terminus: Orotidine 5'-phosphate decarboxylase (282 aa).

Residue Lys-95 is the Proton donor of the active site.

It belongs to the OMP decarboxylase family. Type 2 subfamily.

The catalysed reaction is orotidine 5'-phosphate + H(+) = UMP + CO2. It participates in pyrimidine metabolism; UMP biosynthesis via de novo pathway; UMP from orotate: step 2/2. In Polaromonas naphthalenivorans (strain CJ2), this protein is Orotidine 5'-phosphate decarboxylase.